A 96-amino-acid chain; its full sequence is UPF0166 protein aq_448 (96 aa).

Belongs to the UPF0166 family.

The polypeptide is UPF0166 protein aq_448 (Aquifex aeolicus (strain VF5)).